The sequence spans 207 residues: Large ribosomal subunit protein uL4 (207 aa).

The tract at residues 49–78 (HAVKNRSAVRGGGRKPWRQKGTGRARQGSI) is disordered. The span at 60–71 (GGRKPWRQKGTG) shows a compositional bias: basic residues.

It belongs to the universal ribosomal protein uL4 family. In terms of assembly, part of the 50S ribosomal subunit.

Its function is as follows. One of the primary rRNA binding proteins, this protein initially binds near the 5'-end of the 23S rRNA. It is important during the early stages of 50S assembly. It makes multiple contacts with different domains of the 23S rRNA in the assembled 50S subunit and ribosome. Forms part of the polypeptide exit tunnel. This is Large ribosomal subunit protein uL4 from Enterococcus faecalis (strain ATCC 700802 / V583).